An 898-amino-acid chain; its full sequence is Histone-lysine N-methyltransferase mes-4 (898 aa).

Residues methionine 1 to aspartate 68 form a disordered region. Residues glutamine 36–asparagine 51 are compositionally biased toward polar residues. PHD-type zinc fingers lie at residues aspartate 126–aspartate 214 and isoleucine 303–glycine 355. An SET domain is found at glutamate 537–asparagine 665. In terms of domain architecture, Post-SET spans asparagine 671 to glycine 687. Positions alanine 689–lysine 847 are disordered. A compositionally biased stretch (basic and acidic residues) spans glutamate 692–alanine 704. Over residues lysine 705–asparagine 719 the composition is skewed to basic residues. Low complexity-rich tracts occupy residues isoleucine 737–serine 751 and serine 761–glutamine 773. Residues proline 774–leucine 788 are compositionally biased toward polar residues. Low complexity predominate over residues serine 802–serine 811.

The protein belongs to the class V-like SAM-binding methyltransferase superfamily. Histone-lysine methyltransferase family. SET2 subfamily. In adults, it is predominantly expressed in the germline, and weakly expressed in intestinal cells.

The protein resides in the nucleus. The protein localises to the chromosome. It carries out the reaction L-lysyl(36)-[histone H3] + 2 S-adenosyl-L-methionine = N(6),N(6)-dimethyl-L-lysyl(36)-[histone H3] + 2 S-adenosyl-L-homocysteine + 2 H(+). Histone methyltransferase. Dimethylates 'Lys-36' of histone H3, a specific tag for epigenetic transcriptional activation. Plays a central role in early development and is responsible for all H3 'Lys-36' dimethylation until about the 40-cell stage. Indirectly involved in the global inactivation of the X chromosomes in germline cells, possibly by excluding the mes-2-mes-3-mes-6 repressive Polycomb complex from the autosomes. Not related to transcription elongation. Required for small-RNA-induced H3K27 trimethylation. May suppress sensitivity to RNAi. May regulate the expression of genes required for vulval development. The chain is Histone-lysine N-methyltransferase mes-4 from Caenorhabditis elegans.